A 207-amino-acid polypeptide reads, in one-letter code: Large ribosomal subunit protein uL4 (207 aa).

A disordered region spans residues 50–76 (AVKNRSAVSGGGRKPWKQKGTGRARQG).

The protein belongs to the universal ribosomal protein uL4 family. As to quaternary structure, part of the 50S ribosomal subunit.

One of the primary rRNA binding proteins, this protein initially binds near the 5'-end of the 23S rRNA. It is important during the early stages of 50S assembly. It makes multiple contacts with different domains of the 23S rRNA in the assembled 50S subunit and ribosome. Functionally, forms part of the polypeptide exit tunnel. The chain is Large ribosomal subunit protein uL4 from Staphylococcus aureus (strain JH9).